Here is a 111-residue protein sequence, read N- to C-terminus: RNA polymerase-binding protein RbpA (111 aa).

Belongs to the RNA polymerase-binding protein RbpA family. Forms a complex with the RNAP catalytic core and with free principal sigma factors.

Functionally, binds to RNA polymerase (RNAP), stimulating transcription from principal, but not alternative sigma factor promoters. In Mycobacterium tuberculosis (strain CDC 1551 / Oshkosh), this protein is RNA polymerase-binding protein RbpA.